Reading from the N-terminus, the 335-residue chain is MRIGIVNDMPLAVEALRRALAFEPQHQIVWVASNGAEAVTQCAADTPDVVLMDLLMPVMDGVEATRRIMAESPCAIVIVTVDIEQNVHRVFEAMGYGALDAVNTPALGIGNPQTAAAPLLRKIQNVGWLIGQRDNRGKVQVVPPKAGGARQRLVAIGASAGGPASLAVLLKQLPASFNAAVVLVQHVDEVFAAGMAEWLASESKLPVRLARDGEPPIPGQILLAGTNNHIRLLRNGSLVYTAEPRSFVYRPSIDVFFESVANYWRGDAVGVLLTGMGRDGAQGLKQMRERGFLTIAQDQASCAVYGMPKAAAAIDAAVQILSLEKIAPRLAEVFD.

In terms of domain architecture, Response regulatory spans 2 to 119 (RIGIVNDMPL…GNPQTAAAPL (118 aa)). Asp-53 bears the 4-aspartylphosphate mark. A CheB-type methylesterase domain is found at 144–335 (PKAGGARQRL…IAPRLAEVFD (192 aa)). Catalysis depends on residues Ser-159, His-186, and Asp-279.

This sequence belongs to the CheB family. Post-translationally, phosphorylated by CheA. Phosphorylation of the N-terminal regulatory domain activates the methylesterase activity.

Its subcellular location is the cytoplasm. The catalysed reaction is [protein]-L-glutamate 5-O-methyl ester + H2O = L-glutamyl-[protein] + methanol + H(+). It catalyses the reaction L-glutaminyl-[protein] + H2O = L-glutamyl-[protein] + NH4(+). Involved in chemotaxis. Part of a chemotaxis signal transduction system that modulates chemotaxis in response to various stimuli. Catalyzes the demethylation of specific methylglutamate residues introduced into the chemoreceptors (methyl-accepting chemotaxis proteins or MCP) by CheR. Also mediates the irreversible deamidation of specific glutamine residues to glutamic acid. This Pseudomonas aeruginosa (strain ATCC 15692 / DSM 22644 / CIP 104116 / JCM 14847 / LMG 12228 / 1C / PRS 101 / PAO1) protein is Protein-glutamate methylesterase/protein-glutamine glutaminase 3.